Reading from the N-terminus, the 215-residue chain is Proteasome subunit beta inpE (215 aa).

It belongs to the peptidase T1B family.

The protein resides in the cytoplasm. The protein localises to the nucleus. It catalyses the reaction Cleavage of peptide bonds with very broad specificity.. Its function is as follows. Proteasome subunit beta type-6; part of the inp gene cluster that mediates the biosynthesis of fellutamide B, a mycotoxin that acts as a proteasome inhibitor. In the first step of fellutabmide B biosynthesis inpC activates 3-hydroxydodecanoic acid to generate 3-hydroxydodecanoyl-AMP that is then loaded onto the T0 domain of inpB. The 3-hydroxydodecanoyl-S-phosphopantetheinyl-T0 is sequentially extended with L-Asn and L-Gln by the two CAT modules of inpB. The linear lipodipeptide from inpB is then transferred onto inpA for the addition of the third amino acid, L-Leu. Reductive releasing of the lipotripeptide by the TE domain of inpA produces (2S)-fellutamide B. InpF might be involved in the release and transfer of the lipodipeptide from inpB to inpA. The inp cluster-encoded proteasome subunit inpE confers resistance to internally produced fellutamides. The MFS efflux transporter inpD may contribute to fellutamide resistance as well. The protein is Proteasome subunit beta inpE (inpE) of Emericella nidulans (strain FGSC A4 / ATCC 38163 / CBS 112.46 / NRRL 194 / M139) (Aspergillus nidulans).